Consider the following 99-residue polypeptide: Integration host factor subunit alpha (99 aa).

The protein belongs to the bacterial histone-like protein family. In terms of assembly, heterodimer of an alpha and a beta chain.

This protein is one of the two subunits of integration host factor, a specific DNA-binding protein that functions in genetic recombination as well as in transcriptional and translational control. The sequence is that of Integration host factor subunit alpha from Thioalkalivibrio sulfidiphilus (strain HL-EbGR7).